The chain runs to 268 residues: Photosystem II 22 kDa protein 1, chloroplastic (268 aa).

The transit peptide at 1–60 directs the protein to the chloroplast; that stretch reads MAQSMLVSGANGTVAAASTSRLQPVRPTPFSRLVLSQPSSSLGRAVSVKTVALFGRSKTK. 2 consecutive repeat copies span residues 54-161 and 164-268. 4 helical membrane passes run 99 to 119, 133 to 153, 199 to 219, and 234 to 254; these read VAML…KGIL, AEPL…GALG, LFVG…EIIT, and PINE…IAAI.

This sequence belongs to the ELIP/psbS family. As to expression, expressed at low levels in leaves (at protein level).

Its subcellular location is the plastid. It is found in the chloroplast thylakoid membrane. Functionally, involved in high light-mediated energy-dependent nonphotochemical quenching (NPQ, qE) and thermal dissipation (TD) thus regulating energy conversion in photosystem II and protecting from photoinhibition. Also seems to regulate quantum yield of electron transport in fluctuating light conditions. In Oryza sativa subsp. indica (Rice), this protein is Photosystem II 22 kDa protein 1, chloroplastic.